We begin with the raw amino-acid sequence, 1186 residues long: Cytotoxicity-associated immunodominant antigen (1186 aa).

Basic and acidic residues predominate over residues 630-649 (EKEVEKKLESKSGNKNKMEA). Positions 630 to 652 (EKEVEKKLESKSGNKNKMEAKAQ) are disordered.

Functionally, may be necessary for the transcription, folding, export, or function of the cytotoxin. This Helicobacter pylori (strain ATCC 700392 / 26695) (Campylobacter pylori) protein is Cytotoxicity-associated immunodominant antigen (cagA).